The chain runs to 1363 residues: Zinc finger protein 541 (1363 aa).

Disordered regions lie at residues 1–23 (MEPY…SFSE) and 106–137 (LGAL…SPQN). C2H2-type zinc fingers lie at residues 140 to 162 (LDCS…YLTH), 168 to 190 (HVCK…MLTH), and 196 to 221 (FVCI…EVQH). Disordered stretches follow at residues 232 to 269 (EEEA…GSVL), 286 to 387 (KIPS…GWPE), 440 to 532 (VASR…PGGL), and 574 to 741 (QVAT…GYRL). Positions 311–321 (SLGSSSCTPAS) are enriched in polar residues. The span at 335–345 (EETHPPRKEAA) shows a compositional bias: basic and acidic residues. Residues 453 to 465 (PSSTPTSVEPSPS) show a composition bias toward low complexity. Residues 597–608 (GPWPPQTLPPAP) show a composition bias toward pro residues. Residues 659–670 (PPSLTGPGLLPS) show a composition bias toward low complexity. The C2H2-type 4 zinc finger occupies 838-860 (FVCKNCSQMFYTEKGLSSHMCFH). Residues 935-978 (QGQEKDGEERDSKESCQYRKRKKRPQPKALFAPPAPSALGEPGP) form a disordered region. Basic and acidic residues predominate over residues 937–951 (QEKDGEERDSKESCQ). Residues 1063–1155 (PHINVGSRFQ…VALETLLLRG (93 aa)) form the ELM2 domain. Positions 1170-1221 (TGSDIWTPMEKRLFKKAFCAHKKDFYLIHKMIQTKSVAQCVEYYYIWKKMVK) constitute an SANT domain. Residues 1243–1298 (RTEDKVTCSPRERPTHRPTPELKIKTKSYRRESILHSSPSAAPKRTPEPPGSVESQ) are disordered. Positions 1244-1276 (TEDKVTCSPRERPTHRPTPELKIKTKSYRRESI) are enriched in basic and acidic residues. The segment at 1301–1323 (FPCRECERVFDKIKSRNAHMKRH) adopts a C2H2-type 5 zinc-finger fold. The interval 1343–1363 (LKEEEEEEEEELGADMGPLQW) is disordered. Residues 1345–1355 (EEEEEEEEELG) are compositionally biased toward acidic residues.

Interacts with DNTTIP1. Identified in a complex with KCTD19, HDAC1 and HSPA2. Identified in a complex with HDAC1, HDAC2, DNTTIP1 and KCTD19. Identified in a complex with KCTD19 and HDAC1. In terms of tissue distribution, germ-cell-specific. Specifically present in testicular spermatogenic cells, but not in testicular and mature sperm. During spermatogenesis, it is present in spermatocytes and round spermatids only (at protein level).

Its subcellular location is the nucleus. Functionally, transcription regulator which is essential for male fertility and for the completion of meiotic prophase in spermatocytes. Regulates progression of the pachytene stage of meiotic prophase by activating the expression of genes involved in meiosis and post-meiosis during spermatogenesis. Maintains the repression of pre-pachytene transcriptional programs, including meiotic double-strand breaks (DSB) formation genes in pachytene spermatocytes and suppresses aberrant DSB formation after mid-pachytene, thus ensuring meiosis progression. The sequence is that of Zinc finger protein 541 (Znf541) from Mus musculus (Mouse).